Here is a 541-residue protein sequence, read N- to C-terminus: Major facilitator-type transporter ecdD (541 aa).

A helical transmembrane segment spans residues 15–35 (AWPAILISGFVAFGGILFGYD). Residue N64 is glycosylated (N-linked (GlcNAc...) asparagine). Helical transmembrane passes span 72-92 (AIVS…SPMG), 106-126 (GIFV…PFLA), 129-149 (FFAG…QSET), and 156-176 (GFIV…ASVL). N178 and N184 each carry an N-linked (GlcNAc...) asparagine glycan. A helical membrane pass occupies residues 191–211 (IPIAVQFAWSIILVGGMLILP). Residue N253 is glycosylated (N-linked (GlcNAc...) asparagine). A run of 6 helical transmembrane segments spans residues 277–297 (LVTG…FIMY), 313–333 (VITL…LYAI), 340–360 (PVLL…AVLG), 384–404 (IAFI…SAWV), 418–440 (SLSM…TPYL), and 454–474 (IFFI…FMIY).

It belongs to the major facilitator superfamily. Sugar transporter (TC 2.A.1.1) family.

The protein localises to the membrane. This is Major facilitator-type transporter ecdD from Aspergillus rugulosus (Emericella rugulosa).